Consider the following 174-residue polypeptide: NADH-quinone oxidoreductase subunit B 1 (174 aa).

Positions 53, 54, 118, and 148 each coordinate [4Fe-4S] cluster.

It belongs to the complex I 20 kDa subunit family. NDH-1 is composed of 14 different subunits. Subunits NuoB, C, D, E, F, and G constitute the peripheral sector of the complex. It depends on [4Fe-4S] cluster as a cofactor.

The protein resides in the cell inner membrane. The enzyme catalyses a quinone + NADH + 5 H(+)(in) = a quinol + NAD(+) + 4 H(+)(out). NDH-1 shuttles electrons from NADH, via FMN and iron-sulfur (Fe-S) centers, to quinones in the respiratory chain. The immediate electron acceptor for the enzyme in this species is believed to be ubiquinone. Couples the redox reaction to proton translocation (for every two electrons transferred, four hydrogen ions are translocated across the cytoplasmic membrane), and thus conserves the redox energy in a proton gradient. The chain is NADH-quinone oxidoreductase subunit B 1 from Cereibacter sphaeroides (strain KD131 / KCTC 12085) (Rhodobacter sphaeroides).